The sequence spans 123 residues: Small ribosomal subunit protein uS13 (123 aa).

A compositionally biased stretch (basic residues) spans 99 to 113; the sequence is RGQRTHTNARTRKGG. Residues 99–123 are disordered; the sequence is RGQRTHTNARTRKGGSRLAVAAKKK.

This sequence belongs to the universal ribosomal protein uS13 family. In terms of assembly, part of the 30S ribosomal subunit. Forms a loose heterodimer with protein S19. Forms two bridges to the 50S subunit in the 70S ribosome.

In terms of biological role, located at the top of the head of the 30S subunit, it contacts several helices of the 16S rRNA. In the 70S ribosome it contacts the 23S rRNA (bridge B1a) and protein L5 of the 50S subunit (bridge B1b), connecting the 2 subunits; these bridges are implicated in subunit movement. Contacts the tRNAs in the A and P-sites. This Anaplasma phagocytophilum (strain HZ) protein is Small ribosomal subunit protein uS13.